A 552-amino-acid polypeptide reads, in one-letter code: Low-affinity Fe(2+) transport protein (552 aa).

The Extracellular portion of the chain corresponds to 1-97 (MGKIAEFLGN…DFLVRVAGSQ (97 aa)). Lys39 is covalently cross-linked (Glycyl lysine isopeptide (Lys-Gly) (interchain with G-Cter in ubiquitin)). Residues Ser48 and Ser50 each carry the phosphoserine modification. Residues 98–118 (AVFFIVWIILIIWVVIGIVYN) form a helical membrane-spanning segment. The Cytoplasmic portion of the chain corresponds to 119-225 (APFNWQVVMQ…SNVASRYMGS (107 aa)). Residues 226–246 (IAAMVIFWIGIFVWIGCGAIP) form a helical membrane-spanning segment. Residues 247 to 271 (KDAGNTPPYTGETTGSNPRLKKFSD) are Extracellular-facing. Residues 272–292 (AWQMYINTAVAVSLLICTTFL) form a helical membrane-spanning segment. Over 293 to 354 (QNIRARHDYF…GRKMIDWYAD (62 aa)) the chain is Cytoplasmic. Residues 355-375 (IIGTGIGVLIGVAVFATWIGI) traverse the membrane as a helical segment. The Extracellular segment spans residues 376–383 (GSPMKWDD). The chain crosses the membrane as a helical span at residues 384-404 (NWWLIIGTYTGLIGFLDGFVL). The Cytoplasmic segment spans residues 405–465 (REVYFRIVQH…SQYINRICST (61 aa)). A helical transmembrane segment spans residues 466-486 (PWSVLVSVIIIIGLICIASGL). Topologically, residues 487 to 493 (RWSTTGQ) are extracellular. A helical membrane pass occupies residues 494 to 514 (LIANTPTMIIEEFFLLVLLQA). Topologically, residues 515 to 552 (HNWADRQRRVEVTALYARRRILLSYVEKRFPEVMMLEK) are cytoplasmic.

The protein belongs to the FET4 family.

It localises to the membrane. In terms of biological role, required for Fe(2+) ion low affinity uptake. In Saccharomyces cerevisiae (strain ATCC 204508 / S288c) (Baker's yeast), this protein is Low-affinity Fe(2+) transport protein (FET4).